A 550-amino-acid polypeptide reads, in one-letter code: 2-succinyl-5-enolpyruvyl-6-hydroxy-3-cyclohexene-1-carboxylate synthase (550 aa).

This sequence belongs to the TPP enzyme family. MenD subfamily. In terms of assembly, homodimer. Mg(2+) is required as a cofactor. Mn(2+) serves as cofactor. The cofactor is thiamine diphosphate.

It catalyses the reaction isochorismate + 2-oxoglutarate + H(+) = 5-enolpyruvoyl-6-hydroxy-2-succinyl-cyclohex-3-ene-1-carboxylate + CO2. It functions in the pathway quinol/quinone metabolism; 1,4-dihydroxy-2-naphthoate biosynthesis; 1,4-dihydroxy-2-naphthoate from chorismate: step 2/7. The protein operates within quinol/quinone metabolism; menaquinone biosynthesis. In terms of biological role, catalyzes the thiamine diphosphate-dependent decarboxylation of 2-oxoglutarate and the subsequent addition of the resulting succinic semialdehyde-thiamine pyrophosphate anion to isochorismate to yield 2-succinyl-5-enolpyruvyl-6-hydroxy-3-cyclohexene-1-carboxylate (SEPHCHC). The chain is 2-succinyl-5-enolpyruvyl-6-hydroxy-3-cyclohexene-1-carboxylate synthase from Flavobacterium psychrophilum (strain ATCC 49511 / DSM 21280 / CIP 103535 / JIP02/86).